The primary structure comprises 344 residues: Ubiquitin-associated domain-containing protein 2 (344 aa).

A signal peptide spans M1–F34. Residues Q35–K91 lie on the Extracellular side of the membrane. Residues F92–V111 traverse the membrane as a helical segment. The Cytoplasmic segment spans residues E112–N123. A helical membrane pass occupies residues S124–C142. Residues S143–T162 lie on the Extracellular side of the membrane. N160 carries N-linked (GlcNAc...) asparagine glycosylation. Residues L163–L183 form a helical membrane-spanning segment. Over S184 to H344 the chain is Cytoplasmic. A disordered region spans residues R284–E307. Positions N286–D296 are enriched in basic and acidic residues. The 41-residue stretch at E304–H344 folds into the UBA domain.

The protein localises to the endoplasmic reticulum membrane. Functionally, restricts trafficking of FAF2 from the endoplasmic reticulum to lipid droplets. May negatively regulate the canonical Wnt signaling pathway in the lymphocytes. The sequence is that of Ubiquitin-associated domain-containing protein 2 (UBAC2) from Gallus gallus (Chicken).